A 324-amino-acid polypeptide reads, in one-letter code: MSTATASPAVKLNSGYEIPLVGFGCWKLTNDVASDQIYRAIKSGYRLFDGAEDYANEQEVGEGIKRAIKEGIVKREELFITSKLWNSFHDKKNVEVALMKTLSDLNLDYVDLFYIHFPIAQKPVPIEKKYPPGFYCGDGDKWSIEEVPLLDTWRALEKLVDQGLAKSIGISNFSAQLIYDLIRGCTIKPVALQIEHHPYLTQPKLVEYVQLHDIQITGYSSFGPQSFLEMDLKRALDTPVLLEEPTVKSIADKHGKSPAQVLLRYQTQRGIAVIPRSNSPDRMAQNLSVIDFELTQDDLQAIAELDCNLRFNEPWDFSNIPVFV.

Y54 serves as the catalytic Proton donor. Position 116 (H116) interacts with substrate. 220–286 (SSFGPQSFLE…SNSPDRMAQN (67 aa)) contributes to the NAD(+) binding site.

This sequence belongs to the aldo/keto reductase family.

The catalysed reaction is xylitol + NAD(+) = D-xylose + NADH + H(+). It carries out the reaction xylitol + NADP(+) = D-xylose + NADPH + H(+). The protein operates within carbohydrate metabolism; D-xylose degradation. In terms of biological role, reduces D-xylose into xylitol. Preferentially utilizes NADH as a cosubstrate. The protein is NADH-dependent D-xylose reductase (XYL1) of Candida parapsilosis (Yeast).